Reading from the N-terminus, the 308-residue chain is Porphobilinogen deaminase (308 aa).

Residue Cys243 is modified to S-(dipyrrolylmethanemethyl)cysteine.

Belongs to the HMBS family. In terms of assembly, monomer. Requires dipyrromethane as cofactor.

The enzyme catalyses 4 porphobilinogen + H2O = hydroxymethylbilane + 4 NH4(+). Its pathway is porphyrin-containing compound metabolism; protoporphyrin-IX biosynthesis; coproporphyrinogen-III from 5-aminolevulinate: step 2/4. Its function is as follows. Tetrapolymerization of the monopyrrole PBG into the hydroxymethylbilane pre-uroporphyrinogen in several discrete steps. The polypeptide is Porphobilinogen deaminase (Nitrosomonas europaea (strain ATCC 19718 / CIP 103999 / KCTC 2705 / NBRC 14298)).